Reading from the N-terminus, the 402-residue chain is Enoyl-[acyl-carrier-protein] reductase [NADH] (402 aa).

Residues 48-53, 74-75, 111-112, and 140-141 each bind NAD(+); these read GASSGY, FE, DA, and LA. A substrate-binding site is contributed by Y226. The active-site Proton donor is the Y236. Residues K245 and 274–276 contribute to the NAD(+) site; that span reads VVT.

It belongs to the TER reductase family. Monomer.

It catalyses the reaction a 2,3-saturated acyl-[ACP] + NAD(+) = a (2E)-enoyl-[ACP] + NADH + H(+). It participates in lipid metabolism; fatty acid biosynthesis. In terms of biological role, involved in the final reduction of the elongation cycle of fatty acid synthesis (FAS II). Catalyzes the reduction of a carbon-carbon double bond in an enoyl moiety that is covalently linked to an acyl carrier protein (ACP). This chain is Enoyl-[acyl-carrier-protein] reductase [NADH], found in Xanthomonas axonopodis pv. citri (strain 306).